Here is a 463-residue protein sequence, read N- to C-terminus: METEQPEETFPNTETNGEFGKRPAEDMEEEQAFKRSRNTDEMVELRILLQSKNAGAVIGKGGKNIKALRTDYNASVSVPDSSGPERILSISADIETIGEILKKIIPTLEEGLQLPSPTATSQLPLESDAVECLNYQHFKGSDFDCELRLLIHQSLAGGIIGVKGAKIKELRENTQTTIKLFQECCPHSTDRVVLIGGKPDRVVECIKIILDLISESPIKGRAQPYDPNFYDETYDYGGFTMMFDDRRGRPVGFPMRGRGGFDRMPPGRGGRPMPPSRRDYDDMSPRRGPPPPPPGRGGRGGSRARNLPLPPPPPPRGGDLMAYDRRGRPGDRYDGMVGFSADETWDSAIDTWSPSEWQMAYEPQGGSGYDYSYAGGRGSYGDLGGPIITTQVTIPKDLAGSIIGKGGQRIKQIRHESGASIKIDEPLEGSEDRIITITGTQDQIQNAQYLLQNSVKQYSGKFF.

An N-acetylmethionine modification is found at Met-1. Residues 1–37 (METEQPEETFPNTETNGEFGKRPAEDMEEEQAFKRSR) form a disordered region. A necessary for interaction with DDX1 region spans residues 1–276 (METEQPEETF…GRGGRPMPPS (276 aa)). Over residues 19 to 37 (FGKRPAEDMEEEQAFKRSR) the composition is skewed to basic and acidic residues. Lys-34 bears the N6-acetyllysine; alternate mark. Lys-34 participates in a covalent cross-link: Glycyl lysine isopeptide (Lys-Gly) (interchain with G-Cter in SUMO1); alternate. Residue Lys-34 forms a Glycyl lysine isopeptide (Lys-Gly) (interchain with G-Cter in SUMO2); alternate linkage. Ser-36 is subject to Phosphoserine. Residue Thr-39 is modified to Phosphothreonine. In terms of domain architecture, KH 1 spans 42–104 (MVELRILLQS…ETIGEILKKI (63 aa)). Residues Lys-52 and Lys-60 each participate in a glycyl lysine isopeptide (Lys-Gly) (interchain with G-Cter in SUMO2) cross-link. 2 repeat units span residues 54–76 (AGAV…NASV) and 59–62 (GKGG). The interval 54-421 (AGAVIGKGGK…QIRHESGASI (368 aa)) is 2 X 22 AA approximate repeats. The segment at 59–407 (GKGGKNIKAL…LAGSIIGKGG (349 aa)) is 5 X 4 AA repeats of G-X-G-G. A phosphoserine mark is found at Ser-75 and Ser-116. In terms of domain architecture, KH 2 spans 144-209 (DCELRLLIHQ…DRVVECIKII (66 aa)). Lys-163 is covalently cross-linked (Glycyl lysine isopeptide (Lys-Gly) (interchain with G-Cter in SUMO1); alternate). Residue Lys-163 forms a Glycyl lysine isopeptide (Lys-Gly) (interchain with G-Cter in SUMO2); alternate linkage. Lys-198 bears the N6-acetyllysine mark. Residues 209–337 (ILDLISESPI…RPGDRYDGMV (129 aa)) are interaction with ZIK1. A phosphoserine mark is found at Ser-214 and Ser-216. Lys-219 participates in a covalent cross-link: Glycyl lysine isopeptide (Lys-Gly) (interchain with G-Cter in SUMO2); alternate. Lys-219 is subject to N6-succinyllysine; alternate. Residues 236-273 (YGGFTMMFDDRRGRPVGFPMRGRGGFDRMPPGRGGRPM) are RNA-binding RGG-box. Repeat copies occupy residues 245–250 (DRRGRP), 257–260 (GRGG), and 267–270 (GRGG). Residues 245–329 (DRRGRPVGFP…LMAYDRRGRP (85 aa)) are 2 X 6 AA repeats of D-R-R-G-R-P. The interval 250–329 (PVGFPMRGRG…LMAYDRRGRP (80 aa)) is disordered. The span at 252–266 (GFPMRGRGGFDRMPP) shows a compositional bias: low complexity. A compositionally biased stretch (basic and acidic residues) spans 276–285 (SRRDYDDMSP). Position 284 is a phosphoserine (Ser-284). The 3-4 repeat unit spans residues 295–298 (GRGG). At Arg-316 the chain carries Omega-N-methylarginine. The 2-2 repeat unit spans residues 324 to 329 (DRRGRP). Residue Arg-377 is modified to Omega-N-methylarginine. Ser-379 bears the Phosphoserine mark. At Tyr-380 the chain carries Phosphotyrosine. The KH 3 domain maps to 387–451 (IITTQVTIPK…DQIQNAQYLL (65 aa)). A run of 2 repeats spans residues 399–421 (AGSI…GASI) and 404–407 (GKGG). Lys-405 is subject to N6-acetyllysine; alternate. Lys-405 participates in a covalent cross-link: Glycyl lysine isopeptide (Lys-Gly) (interchain with G-Cter in SUMO2); alternate. Ser-420 is subject to Phosphoserine. Residue Lys-422 forms a Glycyl lysine isopeptide (Lys-Gly) (interchain with G-Cter in SUMO1); alternate linkage. Lys-422 is covalently cross-linked (Glycyl lysine isopeptide (Lys-Gly) (interchain with G-Cter in SUMO2); alternate). Lys-422 is covalently cross-linked (Glycyl lysine isopeptide (Lys-Gly) (interchain with G-Cter in SUMO); alternate).

In terms of assembly, identified in the spliceosome C complex. Interacts with ANKRD28, RBM42 and ZIK1. Interacts with DDX1. Interacts with MDM2; this interaction leads to ubiquitination and proteasomal degradation. Interacts with p53/TP53. Interacts with BRDT. Interacts with IVNS1ABP. Interacts with PPIA/CYPA. Part of a transcription inhibitory ribonucleoprotein complex composed at least of the circular RNA circZNF827, ZNF827 and HNRNPL. In terms of processing, sumoylated by CBX4. Sumoylation is increased upon DNA damage, such as that produced by doxorubicin, etoposide, UV light and camptothecin, due to enhanced CBX4 phosphorylation by HIPK2 under these conditions. Ubiquitinated by MDM2. Doxorubicin treatment does not affect monoubiquitination, but slightly decreases HNRNPK poly-ubiquitination. Post-translationally, O-glycosylated (O-GlcNAcylated), in a cell cycle-dependent manner.

Its subcellular location is the cytoplasm. It localises to the nucleus. It is found in the nucleoplasm. The protein localises to the cell projection. The protein resides in the podosome. Its function is as follows. One of the major pre-mRNA-binding proteins. Binds tenaciously to poly(C) sequences. Likely to play a role in the nuclear metabolism of hnRNAs, particularly for pre-mRNAs that contain cytidine-rich sequences. Can also bind poly(C) single-stranded DNA. Plays an important role in p53/TP53 response to DNA damage, acting at the level of both transcription activation and repression. When sumoylated, acts as a transcriptional coactivator of p53/TP53, playing a role in p21/CDKN1A and 14-3-3 sigma/SFN induction. As far as transcription repression is concerned, acts by interacting with long intergenic RNA p21 (lincRNA-p21), a non-coding RNA induced by p53/TP53. This interaction is necessary for the induction of apoptosis, but not cell cycle arrest. As part of a ribonucleoprotein complex composed at least of ZNF827, HNRNPL and the circular RNA circZNF827 that nucleates the complex on chromatin, may negatively regulate the transcription of genes involved in neuronal differentiation. This Oryctolagus cuniculus (Rabbit) protein is Heterogeneous nuclear ribonucleoprotein K (HNRNPK).